The chain runs to 437 residues: ATP-dependent protease ATPase subunit HslU (437 aa).

ATP is bound by residues valine 18, 60 to 65, aspartate 250, glutamate 315, and arginine 387; that span reads GCGKTE.

The protein belongs to the ClpX chaperone family. HslU subfamily. As to quaternary structure, a double ring-shaped homohexamer of HslV is capped on each side by a ring-shaped HslU homohexamer. The assembly of the HslU/HslV complex is dependent on binding of ATP.

The protein resides in the cytoplasm. Its function is as follows. ATPase subunit of a proteasome-like degradation complex; this subunit has chaperone activity. The binding of ATP and its subsequent hydrolysis by HslU are essential for unfolding of protein substrates subsequently hydrolyzed by HslV. HslU recognizes the N-terminal part of its protein substrates and unfolds these before they are guided to HslV for hydrolysis. This chain is ATP-dependent protease ATPase subunit HslU, found in Methylobacterium nodulans (strain LMG 21967 / CNCM I-2342 / ORS 2060).